Consider the following 438-residue polypeptide: Mannose-1-phosphate guanylyltransferase regulatory subunit alpha (438 aa).

Residues 2–260 (LKAVILIGGP…PNWWSQLKTA (259 aa)) are substrate-binding domain. The GDP-alpha-D-mannose site is built by glutamate 87 and glutamine 256. Residues 282 to 438 (LANVGIKRGE…SRSFKNEIIL (157 aa)) form a hexapeptide repeat domain region. The tract at residues 373–402 (TPSDPDPNKPFAKMENPPLFNNEGKLNPSI) is C-loop.

It belongs to the transferase hexapeptide repeat family. Component of the GMPPA-GMPPB mannose-1-phosphate guanylyltransferase complex composed of 4 GMPPA subunits and 8 GMPPB subunits; the complex is organized into three layers, a central layer made up of 2 GMPPA dimers sandwiched between two layers each made up of 2 GMPPB dimers.

In terms of biological role, regulatory subunit of the GMPPA-GMPPB mannose-1-phosphate guanylyltransferase complex; reduces the catalytic activity of GMPPB when part of the complex. Mediates allosteric feedback inhibition of GMPPB catalytic activity upon binding GDP-alpha-D-mannose. Together with GMPPB regulates GDP-alpha-D-mannose levels. This is Mannose-1-phosphate guanylyltransferase regulatory subunit alpha from Drosophila melanogaster (Fruit fly).